A 255-amino-acid polypeptide reads, in one-letter code: Cell division protein DivIB (255 aa).

Over 1–30 (MKNSKVIKLQDRVPKLKNQKKRNKPPVNHR) the chain is Cytoplasmic. A helical transmembrane segment spans residues 31 to 51 (LILYISILFLLVLFLIYFRSP). The Extracellular segment spans residues 52–255 (LSNIKKISVF…FKYLDDEKKK (204 aa)). A POTRA domain is found at 53 to 121 (SNIKKISVFG…NKIDIHIEEY (69 aa)).

This sequence belongs to the FtsQ/DivIB family. DivIB subfamily.

It localises to the cell membrane. Cell division protein that may be involved in stabilizing or promoting the assembly of the division complex. This Bacillus cytotoxicus (strain DSM 22905 / CIP 110041 / 391-98 / NVH 391-98) protein is Cell division protein DivIB.